Reading from the N-terminus, the 132-residue chain is Antileukoproteinase (132 aa).

An N-terminal signal peptide occupies residues 1-25; it reads MKSSGLFPFLVLLALGTLAPWAVEG. WAP domains follow at residues 28–76 and 82–130; these read KSFK…LDPV and TRRK…VSPV. 8 disulfide bridges follow: cysteine 35-cysteine 64, cysteine 43-cysteine 68, cysteine 51-cysteine 63, cysteine 57-cysteine 72, cysteine 89-cysteine 118, cysteine 96-cysteine 122, cysteine 105-cysteine 117, and cysteine 111-cysteine 126. The elastase inhibitory domain stretch occupies residues 84-132; that stretch reads RKPGKCPVTYGQCLMLNPPNFCEMDGQCKRDLKCCMGMCGKSCVSPVKA.

As to quaternary structure, interacts with GRN; interaction protects progranulin from proteolysis. Detected in blood plasma. Detected in bone marrow myeloid cells. Detected in airway sputum. Detected in parotid gland secretions. Detected in seminal plasma (at protein level). Detected in uterus cervix.

It is found in the secreted. Functionally, acid-stable proteinase inhibitor with strong affinities for trypsin, chymotrypsin, elastase, and cathepsin G. Modulates the inflammatory and immune responses after bacterial infection, and after infection by the intracellular parasite L.major. Down-regulates responses to bacterial lipopolysaccharide (LPS). Plays a role in regulating the activation of NF-kappa-B and inflammatory responses. Has antimicrobial activity against mycobacteria, but not against salmonella. Contributes to normal resistance against infection by M.tuberculosis. Required for normal resistance to infection by L.major. Required for normal wound healing, probably by preventing tissue damage by limiting protease activity. Together with ELANE, required for normal differentiation and proliferation of bone marrow myeloid cells. This Homo sapiens (Human) protein is Antileukoproteinase (SLPI).